Consider the following 525-residue polypeptide: Probable feruloyl esterase B-1 (525 aa).

A signal peptide spans 1 to 20 (MMRWFLLIGLASAAATDSSA). Cystine bridges form between C26-C75, C61-C114, C187-C442, C256-C273, C282-C292, and C502-C524. N-linked (GlcNAc...) asparagine glycans are attached at residues N51, N80, and N98. Catalysis depends on S188, which acts as the Acyl-ester intermediate. Ca(2+)-binding residues include D257, D260, A262, and D264. 3 N-linked (GlcNAc...) asparagine glycosylation sites follow: N283, N288, and N351. Active-site charge relay system residues include D401 and H441.

This sequence belongs to the tannase family.

It is found in the secreted. It carries out the reaction feruloyl-polysaccharide + H2O = ferulate + polysaccharide.. Functionally, involved in degradation of plant cell walls. Hydrolyzes the feruloyl-arabinose ester bond in arabinoxylans as well as the feruloyl-galactose and feruloyl-arabinose ester bonds in pectin. The protein is Probable feruloyl esterase B-1 (faeB-1) of Neosartorya fischeri (strain ATCC 1020 / DSM 3700 / CBS 544.65 / FGSC A1164 / JCM 1740 / NRRL 181 / WB 181) (Aspergillus fischerianus).